The sequence spans 610 residues: ATP-dependent zinc metalloprotease FtsH (610 aa).

Residues 1–3 (MAK) are Cytoplasmic-facing. The helical transmembrane segment at 4-24 (NLMLWLVIAVVLMSIFQNFSA) threads the bilayer. The Extracellular segment spans residues 25–97 (NNINNRKIDY…IIGAAPEEQS (73 aa)). The helical transmembrane segment at 98-118 (FFTAIFISWFPMLLLIGVWVF) threads the bilayer. Residues 119-610 (FMRQMQVGGG…SNICTDDDNN (492 aa)) lie on the Cytoplasmic side of the membrane. 192–199 (GPPGTGKT) serves as a coordination point for ATP. Histidine 414 lines the Zn(2+) pocket. The active site involves glutamate 415. The Zn(2+) site is built by histidine 418 and aspartate 492.

This sequence in the central section; belongs to the AAA ATPase family. The protein in the C-terminal section; belongs to the peptidase M41 family. In terms of assembly, homohexamer. Requires Zn(2+) as cofactor.

The protein localises to the cell membrane. In terms of biological role, acts as a processive, ATP-dependent zinc metallopeptidase for both cytoplasmic and membrane proteins. Plays a role in the quality control of integral membrane proteins. The chain is ATP-dependent zinc metalloprotease FtsH from Buchnera aphidicola subsp. Baizongia pistaciae (strain Bp).